Here is a 96-residue protein sequence, read N- to C-terminus: Small ubiquitin-related modifier 2 (96 aa).

K11 participates in a covalent cross-link: Glycyl lysine isopeptide (Lys-Gly) (interchain with G-Cter in SUMO). The 81-residue stretch at 16–96 (DHINLKVAGQ…FQQQTGGHRI (81 aa)) folds into the Ubiquitin-like domain. G93 is covalently cross-linked (Glycyl lysine isopeptide (Gly-Lys) (interchain with K-? in acceptor proteins)). Residues 94-96 (HRI) constitute a propeptide that is removed on maturation.

Belongs to the ubiquitin family. SUMO subfamily. Interacts with sae2 and ube2i. Covalently attached to a number of proteins. In terms of processing, polymeric chains can be formed through Lys-11 cross-linking. Cleavage of precursor form by a sentrin-specific protease is necessary for function.

The protein resides in the nucleus. Functionally, ubiquitin-like protein that can be covalently attached to proteins as a monomer or as a lysine-linked polymer. Covalent attachment via an isopeptide bond to its substrates requires prior activation by the E1 complex sae1-sae2 and linkage to the E2 enzyme ube2i, and can be promoted by an E3 ligase such as pias1-4. This post-translational modification on lysine residues of proteins plays a crucial role in a number of cellular processes such as nuclear transport, DNA replication and repair, mitosis and signal transduction. Polymeric sumo2 chains are also susceptible to polyubiquitination which functions as a signal for proteasomal degradation of modified proteins. This is Small ubiquitin-related modifier 2 from Danio rerio (Zebrafish).